The primary structure comprises 92 residues: Muscle LIM protein 1 (92 aa).

The region spanning 11–62 (CPACGKSVYAAEERVAGGYKFHKTCFKCSMCNKALDSTNCTEHEKELFCKNC) is the LIM zinc-binding domain. Residues 65 to 70 (RKYGPK) carry the Nuclear localization signal motif.

In the embryo, expression is restricted to the somatic, visceral, and pharyngeal muscles. Within the somatic musculature, MLP60 is distributed throughout the muscle fibers. There is no expression in cardiac mesoderm or in fat body.

It is found in the cytoplasm. The protein resides in the nucleus. In terms of biological role, positive regulator of myogenesis. In Drosophila melanogaster (Fruit fly), this protein is Muscle LIM protein 1 (Mlp60A).